The primary structure comprises 224 residues: uncharacterized protein (224 aa).

It is found in the virion. This is an uncharacterized protein from Acanthamoeba polyphaga mimivirus (APMV).